The chain runs to 300 residues: ATP synthase gamma chain (300 aa).

Belongs to the ATPase gamma chain family. F-type ATPases have 2 components, CF(1) - the catalytic core - and CF(0) - the membrane proton channel. CF(1) has five subunits: alpha(3), beta(3), gamma(1), delta(1), epsilon(1). CF(0) has three main subunits: a, b and c.

It localises to the cell membrane. Produces ATP from ADP in the presence of a proton gradient across the membrane. The gamma chain is believed to be important in regulating ATPase activity and the flow of protons through the CF(0) complex. In Enterococcus hirae (strain ATCC 9790 / DSM 20160 / JCM 8729 / LMG 6399 / NBRC 3181 / NCIMB 6459 / NCDO 1258 / NCTC 12367 / WDCM 00089 / R), this protein is ATP synthase gamma chain.